The following is a 210-amino-acid chain: Putative transmembrane protein DDB_G0267530 (210 aa).

The disordered stretch occupies residues 1–40 (MGVEDQPQTQPQTQPQQQPQMGYQPQMGYQPQAQMGYQPQ). 2 helical membrane-spanning segments follow: residues 119–139 (VIVF…FFFI) and 148–168 (TFGI…VIVV).

It is found in the membrane. This is Putative transmembrane protein DDB_G0267530 from Dictyostelium discoideum (Social amoeba).